The following is a 129-amino-acid chain: Glycine cleavage system H protein (129 aa).

Residues 24–106 (IAVIGISAYA…YEQGWLLKVQ (83 aa)) enclose the Lipoyl-binding domain. K65 is subject to N6-lipoyllysine.

This sequence belongs to the GcvH family. The glycine cleavage system is composed of four proteins: P, T, L and H. (R)-lipoate is required as a cofactor.

Its function is as follows. The glycine cleavage system catalyzes the degradation of glycine. The H protein shuttles the methylamine group of glycine from the P protein to the T protein. The sequence is that of Glycine cleavage system H protein from Synechococcus elongatus (strain ATCC 33912 / PCC 7942 / FACHB-805) (Anacystis nidulans R2).